A 308-amino-acid chain; its full sequence is Ribosomal RNA large subunit methyltransferase F (308 aa).

This sequence belongs to the methyltransferase superfamily. METTL16/RlmF family.

It localises to the cytoplasm. The catalysed reaction is adenosine(1618) in 23S rRNA + S-adenosyl-L-methionine = N(6)-methyladenosine(1618) in 23S rRNA + S-adenosyl-L-homocysteine + H(+). Functionally, specifically methylates the adenine in position 1618 of 23S rRNA. The protein is Ribosomal RNA large subunit methyltransferase F of Escherichia coli O17:K52:H18 (strain UMN026 / ExPEC).